Consider the following 173-residue polypeptide: Putative metal-dependent hydrolase BCE33L2441 (173 aa).

The Zn(2+) site is built by His65, His156, and His160.

This sequence belongs to the metal hydrolase YfiT family. As to quaternary structure, homodimer. Zn(2+) serves as cofactor.

The protein localises to the cytoplasm. In terms of biological role, possible metal-dependent hydrolase. The sequence is that of Putative metal-dependent hydrolase BCE33L2441 from Bacillus cereus (strain ZK / E33L).